The following is a 363-amino-acid chain: 3-dehydroquinate synthase (363 aa).

Residues 109–113 (GASTD), 133–134 (TT), K146, and K155 each bind NAD(+). Residues E188, H251, and H267 each coordinate Zn(2+).

It belongs to the sugar phosphate cyclases superfamily. Dehydroquinate synthase family. NAD(+) serves as cofactor. It depends on Co(2+) as a cofactor. Requires Zn(2+) as cofactor.

The protein resides in the cytoplasm. The enzyme catalyses 7-phospho-2-dehydro-3-deoxy-D-arabino-heptonate = 3-dehydroquinate + phosphate. Its pathway is metabolic intermediate biosynthesis; chorismate biosynthesis; chorismate from D-erythrose 4-phosphate and phosphoenolpyruvate: step 2/7. Functionally, catalyzes the conversion of 3-deoxy-D-arabino-heptulosonate 7-phosphate (DAHP) to dehydroquinate (DHQ). The sequence is that of 3-dehydroquinate synthase from Streptomyces coelicolor (strain ATCC BAA-471 / A3(2) / M145).